The following is a 431-amino-acid chain: Homogentisate 1,2-dioxygenase (431 aa).

The active-site Proton acceptor is the His-286. Residues His-329 and Glu-335 each contribute to the Fe cation site. Positions 344 and 365 each coordinate homogentisate. Fe cation is bound at residue His-365.

The protein belongs to the homogentisate dioxygenase family. In terms of assembly, hexamer; dimer of trimers. Fe cation is required as a cofactor.

The enzyme catalyses homogentisate + O2 = 4-maleylacetoacetate + H(+). Its pathway is amino-acid degradation; L-phenylalanine degradation; acetoacetate and fumarate from L-phenylalanine: step 4/6. In terms of biological role, involved in the catabolism of homogentisate (2,5-dihydroxyphenylacetate or 2,5-OH-PhAc), a central intermediate in the degradation of phenylalanine and tyrosine. Catalyzes the oxidative ring cleavage of the aromatic ring of homogentisate to yield maleylacetoacetate. The protein is Homogentisate 1,2-dioxygenase of Pseudomonas fluorescens (strain Pf0-1).